The sequence spans 330 residues: Glycine betaine/proline betaine-binding periplasmic protein (330 aa).

An N-terminal signal peptide occupies residues 1 to 21 (MRHSVLFATAFATLISTQTFA). Substrate-binding positions include Trp-86, His-90, and 161–163 (WGC). A disulfide bond links Cys-157 and Cys-163.

In terms of assembly, the complex is composed of two ATP-binding proteins (ProV), two transmembrane proteins (ProW) and a solute-binding protein (ProX).

It is found in the periplasm. Part of the ProU ABC transporter complex involved in glycine betaine and proline betaine uptake. Binds glycine betaine and proline betaine with high affinity. The chain is Glycine betaine/proline betaine-binding periplasmic protein from Escherichia coli (strain K12).